A 541-amino-acid chain; its full sequence is Putative nucleobase-ascorbate transporter 10 (541 aa).

The next 12 helical transmembrane spans lie at 52 to 72, 79 to 99, 101 to 121, 141 to 161, 173 to 193, 196 to 216, 235 to 255, 299 to 319, 376 to 396, 397 to 417, 433 to 453, and 476 to 496; these read LLSLGITVLIPSVLVPLMGGG, VIQTLLFVSGLTTLFQSFFGT, LPVIAVASYAYIIPITSIIYS, IQGALIITGCFQVLICILGVW, IAPLATFTGLGLYHIGFPLLA, VEVGLPGLILLIFVTQYLPRF, GMILCIPLVWLFAQLLTSSGV, SFAMMAASFVTLFESTGLFYA, RVIQISAAFMIFFSIFGKFGA, FFASIPLPIMASLYCIVLCFV, FNIKFILGFSFFMAISIPQYF, and VIFMSHTTVAAIIAIVLDCTL.

It belongs to the nucleobase:cation symporter-2 (NCS2) (TC 2.A.40) family.

It localises to the membrane. The sequence is that of Putative nucleobase-ascorbate transporter 10 (NAT10) from Arabidopsis thaliana (Mouse-ear cress).